Here is a 362-residue protein sequence, read N- to C-terminus: 3-dehydroquinate synthase (362 aa).

NAD(+) contacts are provided by residues 70–75 (DGEKYK), 104–108 (GVIGD), 128–129 (TT), lysine 141, and lysine 150. Positions 183, 246, and 263 each coordinate Zn(2+).

This sequence belongs to the sugar phosphate cyclases superfamily. Dehydroquinate synthase family. The cofactor is Co(2+). Zn(2+) is required as a cofactor. Requires NAD(+) as cofactor.

Its subcellular location is the cytoplasm. It carries out the reaction 7-phospho-2-dehydro-3-deoxy-D-arabino-heptonate = 3-dehydroquinate + phosphate. Its pathway is metabolic intermediate biosynthesis; chorismate biosynthesis; chorismate from D-erythrose 4-phosphate and phosphoenolpyruvate: step 2/7. Its function is as follows. Catalyzes the conversion of 3-deoxy-D-arabino-heptulosonate 7-phosphate (DAHP) to dehydroquinate (DHQ). In Acinetobacter baylyi (strain ATCC 33305 / BD413 / ADP1), this protein is 3-dehydroquinate synthase.